A 356-amino-acid polypeptide reads, in one-letter code: MYSGRSGAPPPAHSPYPNSYNHGPPGHSAGHNVPPPPPTQPVQFGHGAPQGYSFQYSNCTGKRKALLIGINYFGQRGQLRGCINDVKNMSTYLNQNFGYAREDMVILTDDQQNPMSQPTKANILRAMHWLVKDARPNDSLFFHYSGHGGQTKDLDGDEEDGNDEVIYPVDFRSAGHIVDDEMHRIMVKSLLPGVRLTAIFDSCHSGSALDLPYIYSTQGILKEPNLAKEAGQGLLSVVSAYARGDVSGMLSTVGGLIKKATSGDASHSKARQTKTSPADVIMWSGSKDNQTSQDATIAGEATGAMSWAFITALKKNPQQSYVQLLRSIRDELATKYSQKPQLSCSHPLNTDLLYVM.

Residues M1–G47 are disordered. Residues H147 and C203 contribute to the active site.

Belongs to the peptidase C14B family.

Functionally, involved in cell death (apoptosis). The polypeptide is Metacaspase-1 (MCA1) (Ajellomyces capsulatus (strain NAm1 / WU24) (Darling's disease fungus)).